Here is a 690-residue protein sequence, read N- to C-terminus: Glycine--tRNA ligase beta subunit (690 aa).

Belongs to the class-II aminoacyl-tRNA synthetase family. As to quaternary structure, tetramer of two alpha and two beta subunits.

The protein resides in the cytoplasm. The catalysed reaction is tRNA(Gly) + glycine + ATP = glycyl-tRNA(Gly) + AMP + diphosphate. This is Glycine--tRNA ligase beta subunit from Lactobacillus gasseri (strain ATCC 33323 / DSM 20243 / BCRC 14619 / CIP 102991 / JCM 1131 / KCTC 3163 / NCIMB 11718 / NCTC 13722 / AM63).